The chain runs to 519 residues: Ribonuclease Y 1 (519 aa).

The chain crosses the membrane as a helical span at residues 3 to 23; sequence VPIVILAIIAIVVGVVGGYYL. A compositionally biased stretch (basic and acidic residues) spans 92–120; sequence QREETLDRKDNSLEKRENSLNRRDKKLSA. Residues 92 to 124 are disordered; the sequence is QREETLDRKDNSLEKRENSLNRRDKKLSAEEQN. In terms of domain architecture, KH spans 209-272; it reads TITVVTLPND…EVAKIALEKL (64 aa). The HD domain maps to 335-428; the sequence is ALAHSIEVAK…VSTADIISAT (94 aa).

Belongs to the RNase Y family.

It is found in the cell membrane. Endoribonuclease that initiates mRNA decay. In Levilactobacillus brevis (strain ATCC 367 / BCRC 12310 / CIP 105137 / JCM 1170 / LMG 11437 / NCIMB 947 / NCTC 947) (Lactobacillus brevis), this protein is Ribonuclease Y 1.